Here is a 128-residue protein sequence, read N- to C-terminus: Small ribosomal subunit protein uS11 (128 aa).

It belongs to the universal ribosomal protein uS11 family. Part of the 30S ribosomal subunit. Interacts with proteins S7 and S18. Binds to IF-3.

Located on the platform of the 30S subunit, it bridges several disparate RNA helices of the 16S rRNA. Forms part of the Shine-Dalgarno cleft in the 70S ribosome. This chain is Small ribosomal subunit protein uS11, found in Wolbachia sp. subsp. Drosophila simulans (strain wRi).